Reading from the N-terminus, the 344-residue chain is Phenylalanine--tRNA ligase alpha subunit (344 aa).

A Mg(2+)-binding site is contributed by glutamate 269.

This sequence belongs to the class-II aminoacyl-tRNA synthetase family. Phe-tRNA synthetase alpha subunit type 1 subfamily. In terms of assembly, tetramer of two alpha and two beta subunits. It depends on Mg(2+) as a cofactor.

The protein resides in the cytoplasm. The enzyme catalyses tRNA(Phe) + L-phenylalanine + ATP = L-phenylalanyl-tRNA(Phe) + AMP + diphosphate + H(+). The sequence is that of Phenylalanine--tRNA ligase alpha subunit from Ralstonia nicotianae (strain ATCC BAA-1114 / GMI1000) (Ralstonia solanacearum).